An 860-amino-acid chain; its full sequence is Glucans biosynthesis glucosyltransferase H (860 aa).

A run of 6 helical transmembrane segments spans residues 146–166 (ILLI…KGIL), 200–220 (ILLL…TALM), 519–539 (VFLT…FLVL), 576–596 (LFST…ILIW), 610–630 (TVSM…RMLF), and 686–706 (FLWW…VSVI).

Belongs to the glycosyltransferase 2 family. OpgH subfamily.

It is found in the cell inner membrane. The protein operates within glycan metabolism; osmoregulated periplasmic glucan (OPG) biosynthesis. Functionally, involved in the biosynthesis of osmoregulated periplasmic glucans (OPGs). The sequence is that of Glucans biosynthesis glucosyltransferase H from Pseudomonas savastanoi pv. phaseolicola (strain 1448A / Race 6) (Pseudomonas syringae pv. phaseolicola (strain 1448A / Race 6)).